The primary structure comprises 585 residues: Pyruvate kinase (585 aa).

Substrate is bound at residue R32. K(+) contacts are provided by N34, S36, D66, and T67. 34–37 (NFSH) provides a ligand contact to ATP. ATP contacts are provided by R73 and K156. E222 lines the Mg(2+) pocket. Substrate-binding residues include G245, D246, and T278. Mg(2+) is bound at residue D246.

Belongs to the pyruvate kinase family. This sequence in the C-terminal section; belongs to the PEP-utilizing enzyme family. As to quaternary structure, homotetramer. Mg(2+) is required as a cofactor. K(+) serves as cofactor.

It catalyses the reaction pyruvate + ATP = phosphoenolpyruvate + ADP + H(+). It participates in carbohydrate degradation; glycolysis; pyruvate from D-glyceraldehyde 3-phosphate: step 5/5. The polypeptide is Pyruvate kinase (pyk) (Bacillus licheniformis).